A 538-amino-acid polypeptide reads, in one-letter code: Potassium channel subfamily K member 10 (538 aa).

Residues 1 to 71 (MFFLYTDFFL…GLQTVMKWKT (71 aa)) are Cytoplasmic-facing. Residues 72–92 (VVAIFVVVVVYLVTGGLVFRA) form a helical membrane-spanning segment. N-linked (GlcNAc...) asparagine glycans are attached at residues Asn144, Asn147, and Asn148. An intramembrane region (pore-forming) is located at residues 154-180 (LGSAFFFAGTVITTIGYGNIAPSTEGG). Residues Thr167, Ile168, Gly169, and Tyr170 each coordinate K(+). The selectivity filter 1 stretch occupies residues 167–172 (TIGYGN). Residues 182-202 (IFCILYAIFGIPLFGFLLAGI) traverse the membrane as a helical segment. Residues 203 to 233 (GDQLGTIFGKSIARVEKVFRKKQVSQTKIRV) are Cytoplasmic-facing. The chain crosses the membrane as a helical span at residues 234 to 254 (ISTILFILAGCIVFVTIPAVI). Residues 263 to 294 (ALESIYFVVVTLTTVGFGDFVAGGNAGINYRE) constitute an intramembrane region (pore-forming). 4 residues coordinate K(+): Thr276, Val277, Gly278, and Phe279. The selectivity filter 2 stretch occupies residues 276–281 (TVGFGD). A helical membrane pass occupies residues 299-319 (LVWFWILVGLAYFAAVLSMIG). Topologically, residues 320-538 (DWLRVLSKKT…ENNSLLEDRN (219 aa)) are cytoplasmic. Polar residues predominate over residues 412–421 (SQESINNRPN). Disordered stretches follow at residues 412 to 443 (SQESINNRPNNLRLKGPEQLNKHGQGASEDNI) and 510 to 538 (QHAELENGMIPTDTKDREPENNSLLEDRN). Positions 522–538 (DTKDREPENNSLLEDRN) are enriched in basic and acidic residues.

Belongs to the two pore domain potassium channel (TC 1.A.1.8) family. Homodimer; disulfide-linked. Forms heterodimers with other 2-pore domain K(+) channel subunits, such as KCNK2, KCNK4 and KCNK18. As to expression, abundantly expressed in pancreas and kidney and to a lower level in brain, testis, colon, and small intestine. In brain, mainly expressed in cerebellum, occipital lobe, putamen, and thalamus. No expression is detected in amygdala and spinal cord. Strongly expressed in kidney (primarily in the proximal tubule) and pancreas. In terms of tissue distribution, abundantly expressed in brain.

It is found in the cell membrane. The enzyme catalyses K(+)(in) = K(+)(out). It carries out the reaction Rb(+)(in) = Rb(+)(out). It catalyses the reaction Cs(+)(in) = Cs(+)(out). Activated by various stimuli including acidic pH, anesthetics chloroform, halothane and isoflurane, mechanical stretch, lipids such as arachidonic, docosahexaenoic and linoleic polyunsaturated fatty acids and lysophosphatidylcholine and lysophosphatidylinositol lysophospholipids. Inhibited by norfluoxetine, the active metabolite of antidepressant fluoxetine (Prozac). K(+) channel that conducts voltage-dependent outward rectifying currents upon membrane depolarization. Voltage sensing is coupled to K(+) electrochemical gradient in an 'ion flux gating' mode where outward but not inward ion flow opens the gate. Converts to voltage-independent 'leak' conductance mode upon stimulation by various stimuli including mechanical membrane stretch, acidic pH, heat and lipids. Homo- and heterodimerizes to form functional channels with distinct regulatory and gating properties. In trigeminal ganglia sensory neurons, the heterodimer of KCNK10/TREK-2 and KCNK18/TRESK inhibits neuronal firing and neurogenic inflammation by stabilizing the resting membrane potential at K(+) equilibrium potential as well as by regulating the threshold of action potentials and the spike frequency. Permeable to other monovalent ions such as Rb(+) and Cs(+). This is Potassium channel subfamily K member 10 from Homo sapiens (Human).